A 599-amino-acid polypeptide reads, in one-letter code: Aspartate--tRNA(Asp/Asn) ligase (599 aa).

An L-aspartate-binding site is contributed by E180. The segment at 204–207 is aspartate; sequence QLLK. Position 226 (R226) interacts with L-aspartate. ATP contacts are provided by residues 226-228 and Q235; that span reads RDE. H457 serves as a coordination point for L-aspartate. E491 contacts ATP. R498 is an L-aspartate binding site. 543–546 is an ATP binding site; sequence GWDR. Residues 565 to 599 form a disordered region; that stretch reads KAGGGRDPLTGAPAPISDEQRAETGVDYDPDADEN. Residues 590 to 599 are compositionally biased toward acidic residues; the sequence is VDYDPDADEN.

This sequence belongs to the class-II aminoacyl-tRNA synthetase family. Type 1 subfamily. Homodimer.

It is found in the cytoplasm. The catalysed reaction is tRNA(Asx) + L-aspartate + ATP = L-aspartyl-tRNA(Asx) + AMP + diphosphate. Its function is as follows. Aspartyl-tRNA synthetase with relaxed tRNA specificity since it is able to aspartylate not only its cognate tRNA(Asp) but also tRNA(Asn). Reaction proceeds in two steps: L-aspartate is first activated by ATP to form Asp-AMP and then transferred to the acceptor end of tRNA(Asp/Asn). The chain is Aspartate--tRNA(Asp/Asn) ligase from Bifidobacterium longum (strain NCC 2705).